We begin with the raw amino-acid sequence, 409 residues long: Translation initiation factor 2 subunit gamma (409 aa).

One can recognise a tr-type G domain in the interval 7-203; sequence QPEVNIGLVG…TIESEIPTPD (197 aa). Residues 16–23 are G1; sequence GHVDHGKT. Mg(2+) is bound by residues Asp19, Thr23, Gly44, and Ser46. Residue 19 to 24 participates in GTP binding; sequence DHGKTT. Positions 44–48 are G2; the sequence is GISIR. The interval 90–93 is G3; the sequence is DAPG. GTP is bound by residues 146–149 and 181–183; these read NKID and SAQ. The interval 146 to 149 is G4; that stretch reads NKID. The segment at 181–183 is G5; it reads SAQ.

Belongs to the TRAFAC class translation factor GTPase superfamily. Classic translation factor GTPase family. EIF2G subfamily. As to quaternary structure, heterotrimer composed of an alpha, a beta and a gamma chain. Mg(2+) serves as cofactor.

The enzyme catalyses GTP + H2O = GDP + phosphate + H(+). Its function is as follows. eIF-2 functions in the early steps of protein synthesis by forming a ternary complex with GTP and initiator tRNA. The protein is Translation initiation factor 2 subunit gamma of Natronomonas pharaonis (strain ATCC 35678 / DSM 2160 / CIP 103997 / JCM 8858 / NBRC 14720 / NCIMB 2260 / Gabara) (Halobacterium pharaonis).